Consider the following 338-residue polypeptide: Glycerol-3-phosphate dehydrogenase [NAD(P)+] (338 aa).

Ser-13, Trp-14, and Lys-108 together coordinate NADPH. Residues Lys-108, Gly-139, and Ser-141 each coordinate sn-glycerol 3-phosphate. Position 143 (Ala-143) interacts with NADPH. The sn-glycerol 3-phosphate site is built by Lys-194, Asp-247, Ser-257, Arg-258, and Asn-259. Lys-194 functions as the Proton acceptor in the catalytic mechanism. An NADPH-binding site is contributed by Arg-258. 2 residues coordinate NADPH: Val-282 and Glu-284.

Belongs to the NAD-dependent glycerol-3-phosphate dehydrogenase family.

The protein localises to the cytoplasm. It carries out the reaction sn-glycerol 3-phosphate + NAD(+) = dihydroxyacetone phosphate + NADH + H(+). The enzyme catalyses sn-glycerol 3-phosphate + NADP(+) = dihydroxyacetone phosphate + NADPH + H(+). It participates in membrane lipid metabolism; glycerophospholipid metabolism. Catalyzes the reduction of the glycolytic intermediate dihydroxyacetone phosphate (DHAP) to sn-glycerol 3-phosphate (G3P), the key precursor for phospholipid synthesis. The sequence is that of Glycerol-3-phosphate dehydrogenase [NAD(P)+] from Streptococcus agalactiae serotype V (strain ATCC BAA-611 / 2603 V/R).